The chain runs to 370 residues: Protein PAM71, chloroplastic (370 aa).

Residues 1–38 form a disordered region; it reads MLSLNLSESLRIPFQNPRPPKSDFSSTSSSPSSSSRRC. The N-terminal 73 residues, 1–73, are a transit peptide targeting the chloroplast; the sequence is MLSLNLSESL…RNESQQLGFR (73 aa). Positions 22 to 38 are enriched in low complexity; sequence SDFSSTSSSPSSSSRRC. The Stromal segment spans residues 74–113; it reads CFQRNDAACYLEKAESEEHDRNLDVLVESSIAHSRREIQR. Residues 114-134 form a helical membrane-spanning segment; it reads VLMFLAVSGSVALLGTDPAFA. Topologically, residues 135 to 161 are lumenal, thylakoid; it reads ASSIPNVTQSLVTSFGDLGDISSGFAS. A helical membrane pass occupies residues 162–182; it reads AFLLIFFSELGDKTFFIAALL. The Stromal portion of the chain corresponds to 183–188; the sequence is AARNSA. A helical transmembrane segment spans residues 189-209; that stretch reads ATVFVGTFGALGIMTIISVVL. Over 210-228 the chain is Lumenal, thylakoid; sequence GRTFHYVDEVLPFRFGGTD. A helical transmembrane segment spans residues 229–249; it reads LPIDDIAAVCLLVYFGVSTLL. Topologically, residues 250–275 are stromal; that stretch reads DAVSDEGKADEEQKEAELAVSELSGN. A helical membrane pass occupies residues 276 to 296; it reads GAGIVAAANTIISTFALVFVA. Residues 297-315 are Lumenal, thylakoid-facing; sequence EWGDKSFFSTIALAAASSP. A helical membrane pass occupies residues 316 to 336; sequence LGVIAGALAGHGAATLLAVLG. Residues 337-348 lie on the Stromal side of the membrane; it reads GSLLGNFLSEKA. A helical transmembrane segment spans residues 349–369; the sequence is IAYVGGVLFLVFAAVTVAEIV. Thr370 is a topological domain (lumenal, thylakoid).

Belongs to the GDT1 family. As to quaternary structure, homodimer.

The protein localises to the plastid. The protein resides in the chloroplast membrane. It localises to the thylakoid. Functionally, mn(2+)/H(+) exchanger, which transport Mn(2+)from the chloroplast stroma into the acidic thylakoid lumen. Might be a chloroplast-localized Ca(2+)/H(+) antiporter. Regulates Ca(2+), Mn(2+) and pH homeostasis. Required for chloroplast development. The polypeptide is Protein PAM71, chloroplastic (Arabidopsis thaliana (Mouse-ear cress)).